An 85-amino-acid polypeptide reads, in one-letter code: Large ribosomal subunit protein bL31B (85 aa).

Belongs to the bacterial ribosomal protein bL31 family. Type B subfamily. In terms of assembly, part of the 50S ribosomal subunit.

This Macrococcus caseolyticus (strain JCSC5402) (Macrococcoides caseolyticum) protein is Large ribosomal subunit protein bL31B.